Consider the following 345-residue polypeptide: Phosphate acyltransferase (345 aa).

It belongs to the PlsX family. In terms of assembly, homodimer. Probably interacts with PlsY.

The protein localises to the cytoplasm. It catalyses the reaction a fatty acyl-[ACP] + phosphate = an acyl phosphate + holo-[ACP]. The protein operates within lipid metabolism; phospholipid metabolism. Functionally, catalyzes the reversible formation of acyl-phosphate (acyl-PO(4)) from acyl-[acyl-carrier-protein] (acyl-ACP). This enzyme utilizes acyl-ACP as fatty acyl donor, but not acyl-CoA. The sequence is that of Phosphate acyltransferase from Thermodesulfovibrio yellowstonii (strain ATCC 51303 / DSM 11347 / YP87).